Here is a 675-residue protein sequence, read N- to C-terminus: Acetyl-coenzyme A synthetase 2 (675 aa).

CoA-binding positions include 206-209 and threonine 325; that span reads RGGK. ATP contacts are provided by residues 401–403, 425–430, aspartate 516, and arginine 531; these read GEP and DTMWQT. Serine 539 contributes to the CoA binding site. Position 542 (arginine 542) interacts with ATP. Arginine 604 contacts CoA.

The protein belongs to the ATP-dependent AMP-binding enzyme family.

The catalysed reaction is acetate + ATP + CoA = acetyl-CoA + AMP + diphosphate. The protein is Acetyl-coenzyme A synthetase 2 (ACS2) of Zygosaccharomyces bailii.